The sequence spans 144 residues: Bacilliredoxin BC_2157 (144 aa).

The protein belongs to the bacilliredoxin family.

This chain is Bacilliredoxin BC_2157, found in Bacillus cereus (strain ATCC 14579 / DSM 31 / CCUG 7414 / JCM 2152 / NBRC 15305 / NCIMB 9373 / NCTC 2599 / NRRL B-3711).